We begin with the raw amino-acid sequence, 321 residues long: MGPIMSTGETSTAHTVLGCQITDKTVITLFVILVFSCLVAVVGNGFIIIALGMKWLLRRTLSAHNKLLISLAASRFCLQCVVIGKNIYVFLNPSSFPYNPVIQLLNLMWDFLTAATIWFCSLLGFFYCVKIATLTHPVFVWLKYRLPGWVPWMLLSAVGMSSLTSILCFIGNHMIYQNYARRGHQPWNATGNSLRHSLEKFYFISIKIIMWTVPTVIFSIFMSLLLVSLVRHMKKTLLALSELRDVWAQAHFKALLPLLSFIILFISCFLTLVLSSASSTPYQEFRYWMWQVVIHLCTVIHPIVILLSNPVLRVVMKRGCC.

Over Met-1–Thr-28 the chain is Extracellular. Residues Leu-29–Ile-49 traverse the membrane as a helical segment. The Cytoplasmic segment spans residues Ala-50 to Arg-75. A helical membrane pass occupies residues Phe-76–Phe-96. Residues Pro-97–Asn-106 are Extracellular-facing. A helical transmembrane segment spans residues Leu-107 to Tyr-127. Topologically, residues Cys-128–Trp-149 are cytoplasmic. The chain crosses the membrane as a helical span at residues Val-150–Ile-170. Over Gly-171–Lys-207 the chain is Extracellular. The N-linked (GlcNAc...) asparagine glycan is linked to Asn-188. A helical transmembrane segment spans residues Ile-208–Ser-228. Residues Leu-229–Lys-253 lie on the Cytoplasmic side of the membrane. Residues Ala-254 to Leu-274 form a helical membrane-spanning segment. Over Ser-275–Arg-286 the chain is Extracellular. The chain crosses the membrane as a helical span at residues Tyr-287–Leu-307. The Cytoplasmic segment spans residues Ser-308–Cys-321.

Belongs to the G-protein coupled receptor T2R family.

The protein localises to the membrane. Functionally, putative taste receptor which may play a role in the perception of bitterness. This Rattus norvegicus (Rat) protein is Taste receptor type 2 member 135.